A 535-amino-acid chain; its full sequence is Bifunctional purine biosynthesis protein PurH (535 aa).

Positions 6 to 151 (TRLPVRRALI…KNHKDVAIVV (146 aa)) constitute an MGS-like domain.

The protein belongs to the PurH family.

It carries out the reaction (6R)-10-formyltetrahydrofolate + 5-amino-1-(5-phospho-beta-D-ribosyl)imidazole-4-carboxamide = 5-formamido-1-(5-phospho-D-ribosyl)imidazole-4-carboxamide + (6S)-5,6,7,8-tetrahydrofolate. The catalysed reaction is IMP + H2O = 5-formamido-1-(5-phospho-D-ribosyl)imidazole-4-carboxamide. Its pathway is purine metabolism; IMP biosynthesis via de novo pathway; 5-formamido-1-(5-phospho-D-ribosyl)imidazole-4-carboxamide from 5-amino-1-(5-phospho-D-ribosyl)imidazole-4-carboxamide (10-formyl THF route): step 1/1. It participates in purine metabolism; IMP biosynthesis via de novo pathway; IMP from 5-formamido-1-(5-phospho-D-ribosyl)imidazole-4-carboxamide: step 1/1. The protein is Bifunctional purine biosynthesis protein PurH of Ectopseudomonas mendocina (strain ymp) (Pseudomonas mendocina).